The sequence spans 285 residues: Urease accessory protein UreD (285 aa).

Belongs to the UreD family. As to quaternary structure, ureD, UreF and UreG form a complex that acts as a GTP-hydrolysis-dependent molecular chaperone, activating the urease apoprotein by helping to assemble the nickel containing metallocenter of UreC. The UreE protein probably delivers the nickel.

The protein resides in the cytoplasm. Required for maturation of urease via the functional incorporation of the urease nickel metallocenter. The polypeptide is Urease accessory protein UreD (Methylobacillus flagellatus (strain ATCC 51484 / DSM 6875 / VKM B-1610 / KT)).